The sequence spans 536 residues: MKTSIVLSIVALFLTSKASADCWSERLGWPCCSDSNAEVIYVDDDGDWGVENNDWCGIQKEEENNNSWDMGDWNQGGNQGGGMPWGDFGGNQGGGMQWGDFGGNQGGGMPWGDFGGNQGGGMPWGDFGGNQGGNQGGGMPWGDFGGNQGGNQGGGMPWGDFGGNQGGGMQWGDFGGNQGGNQGGGMPWGDFGGNQGGGMQWGDFGGNQGGNQGGGMPWGDFGGNQGGGMQWGDFGGNQGGGMQWGDFGGNQGGNQDWGNQGGNSGPTVEYSTDVDCSGKTLKSNTNLNINGRKVIVKFPSGFTGDKAAPLLINYHPIMGSASQWESGSQTAKAALNDGAIVAFMDGAQGPMGQAWNVGPCCTDADDVQFTRNFIKEITSKACVDPKRIYAAGFSMGGGMSNYAGCQLADVIAAAAPSAFDLAKEIVDGGKCKPARPFPILNFRGTQDNVVMYNGGLSQVVQGKPITFMGAKNNFKEWAKMNGCTGEPKQNTPGNNCEMYENCKGGVKVGLCTINGGGHAEGDGKMGWDFVKQFSLP.

The first 20 residues, 1 to 20 (MKTSIVLSIVALFLTSKASA), serve as a signal peptide directing secretion. A CBM10 domain is found at 21-59 (DCWSERLGWPCCSDSNAEVIYVDDDGDWGVENNDWCGIQ). Residues 22–59 (CWSERLGWPCCSDSNAEVIYVDDDGDWGVENNDWCGIQ) are cellulose-binding. Asparagine 65 is a glycosylation site (N-linked (GlcNAc...) asparagine). 12 consecutive repeat copies span residues 78-90 (NQGGGMPWGDFGG), 91-103 (NQGGGMQWGDFGG), 104-116 (NQGGGMPWGDFGG), 117-129 (NQGGGMPWGDFGG), 134-146 (NQGGGMPWGDFGG), 151-163 (NQGGGMPWGDFGG), 164-176 (NQGGGMQWGDFGG), 181-193 (NQGGGMPWGDFGG), 194-206 (NQGGGMQWGDFGG), 211-223 (NQGGGMPWGDFGG), 224-236 (NQGGGMQWGDFGG), and 237-249 (NQGGGMQWGDFGG). The interval 78 to 249 (NQGGGMPWGD…GGMQWGDFGG (172 aa)) is 12 X 13 AA repeats of N-Q-G-G-G-M-[PQ]-W-G-D-F-G-G. Residues 203–252 (DFGGNQGGNQGGGMPWGDFGGNQGGGMQWGDFGGNQGGGMQWGDFGGNQG) show a composition bias toward gly residues. The tract at residues 203 to 273 (DFGGNQGGNQ…SGPTVEYSTD (71 aa)) is disordered. The tract at residues 257–536 (WGNQGGNSGP…WDFVKQFSLP (280 aa)) is catalytic.

As to quaternary structure, component of the multienzyme cellulase-hemicellulase complex.

It localises to the secreted. It catalyses the reaction feruloyl-polysaccharide + H2O = ferulate + polysaccharide.. With respect to regulation, inhibited by the specific serine esterase inhibitor AEBSF. Functionally, involved in degradation of plant cell walls. Hydrolyzes of the feruloyl-arabinose ester bond in arabinoxylans as well as the feruloyl-galactose and feruloyl-arabinose ester bonds in pectin. The protein is Feruloyl esterase B (ESTA) of Piromyces equi.